The sequence spans 144 residues: MTRSALQMGRLTLVLCLLLQLVLVTQACFLGNCLNDGERDVDGREAMRPCKYCSFGQCVGPQICCGDRGCEMGSEEANKCREEDEDSTPCQVFGWPCTLNNPGNTNGKCVANCIGICCVTDTCVVSSECQKESKSGIRVGCQRS.

A signal peptide spans 1–27 (MTRSALQMGRLTLVLCLLLQLVLVTQA). C28 and C33 are oxidised to a cystine. D36 bears the Aspartic acid 1-amide mark. Positions 37 to 44 (GERDVDGR) are excised as a propeptide. Disulfide bonds link C50–C90, C53–C64, C58–C80, C65–C70, C97–C117, C109–C129, and C118–C123. A propeptide spanning residues 131–144 (KESKSGIRVGCQRS) is cleaved from the precursor.

Belongs to the vasopressin/oxytocin family. As to expression, expressed by the venom duct.

Its subcellular location is the secreted. In Conus bayani (Bayan's cone), this protein is Conopressin-conophysin.